Reading from the N-terminus, the 671-residue chain is DNA polymerase kappa (671 aa).

The 181-residue stretch at 105-285 (WLHVDMDAFY…LPVRKIGGIG (181 aa)) folds into the UmuC domain. Residues D109 and D200 each coordinate Mg(2+). The active site involves E201. The UBZ3-type zinc-finger motif lies at 576–613 (YWIDGYKCVLCGIELPPSFVEERQEHSDFHLAQRLQNE). The Zn(2+) site is built by C583, C586, H601, and H605. Positions 607-671 (AQRLQNEETG…NQNSNETQRK (65 aa)) are disordered. Residues 625–632 (KRRILGKE) carry the Nuclear localization signal motif. Positions 629–650 (LGKEKVNSKPKKQKPDQKDSSK) are enriched in basic and acidic residues. Polar residues predominate over residues 659–671 (TKSNQNSNETQRK).

It belongs to the DNA polymerase type-Y family. Mg(2+) serves as cofactor. Expressed in roots, leaves, stems, flowers and siliques. Present in endoreduplicating cells.

Its subcellular location is the nucleus. It carries out the reaction DNA(n) + a 2'-deoxyribonucleoside 5'-triphosphate = DNA(n+1) + diphosphate. Unable to bypass a single 1,N(6)-ethenoadenine (epsilon-dA) or an abasic site lesions in DNA templates. In terms of biological role, template-directed low-fidelity DNA polymerase specifically involved in DNA repair. Able to extend primer-terminal mispairs, and to insert nucleotides opposite to a single 7,8-dihydro-8-oxoGuanine (8-oxoG) lesion and moderately extend from the resulting primer end, thus leading to both error-free and error-prone bypass of 8-oxoG DNA lesions. Probably involved in consecutive DNA replication cycles in the absence of mitosis. Binds preferentially template-primer DNA substrates or single-stranded DNA. Plays an important role in translesion synthesis, where the normal high-fidelity DNA polymerases cannot proceed and DNA synthesis stalls. Depending on the context, it inserts the correct base, but causes frequent base transitions, transversions and frameshifts. The polypeptide is DNA polymerase kappa (Arabidopsis thaliana (Mouse-ear cress)).